We begin with the raw amino-acid sequence, 271 residues long: MFSIQQPLLVFSDLDGTLLDSHSYDWQPAAPWLSRLREANVPVILCSSKTSAEMLYLQKTLGLQGLPLIAENGAVIQLAEQWQDIDGFPRIISGISHGEISQVLNTLREKEHFKFTTFDDVDDATIAEWTGLSRSQAALTQLHEASVTLIWRDSDERMAQFTARLNELGLQFMQGARFWHVLDASAGKDQAANWIIATYQQLSGKRPTTLGLGDGPNDAPLLEVMDYAVIVKGLNREGVHLHDEDPARVWRTQREGPEGWREGLDHFFSAR.

D13 serves as the catalytic Nucleophile. Positions 13, 15, and 214 each coordinate Mg(2+).

It belongs to the HAD-like hydrolase superfamily. MPGP family. The cofactor is Mg(2+).

The protein resides in the cytoplasm. The catalysed reaction is 2-O-(alpha-D-mannosyl)-3-phosphoglycerate + H2O = (2R)-2-O-(alpha-D-mannosyl)-glycerate + phosphate. The chain is Mannosyl-3-phosphoglycerate phosphatase from Escherichia coli (strain SE11).